Here is a 213-residue protein sequence, read N- to C-terminus: Protein-L-isoaspartate O-methyltransferase 1 (213 aa).

The active site involves Ser64.

Belongs to the methyltransferase superfamily. L-isoaspartyl/D-aspartyl protein methyltransferase family.

It is found in the cytoplasm. The catalysed reaction is [protein]-L-isoaspartate + S-adenosyl-L-methionine = [protein]-L-isoaspartate alpha-methyl ester + S-adenosyl-L-homocysteine. Its function is as follows. Catalyzes the methyl esterification of L-isoaspartyl residues in peptides and proteins that result from spontaneous decomposition of normal L-aspartyl and L-asparaginyl residues. It plays a role in the repair and/or degradation of damaged proteins. The polypeptide is Protein-L-isoaspartate O-methyltransferase 1 (Nitrosococcus oceani (strain ATCC 19707 / BCRC 17464 / JCM 30415 / NCIMB 11848 / C-107)).